The chain runs to 127 residues: Transcription antitermination protein NusB (127 aa).

The protein belongs to the NusB family.

Involved in transcription antitermination. Required for transcription of ribosomal RNA (rRNA) genes. Binds specifically to the boxA antiterminator sequence of the ribosomal RNA (rrn) operons. The polypeptide is Transcription antitermination protein NusB (Lysinibacillus sphaericus (strain C3-41)).